The following is a 447-amino-acid chain: Kynureninase (447 aa).

Pyridoxal 5'-phosphate is bound by residues Leu-106, Thr-107, 134-137 (FPSD), Asp-220, His-223, and Tyr-245. The residue at position 246 (Lys-246) is an N6-(pyridoxal phosphate)lysine. Residues Trp-275 and Asn-303 each coordinate pyridoxal 5'-phosphate.

This sequence belongs to the kynureninase family. Homodimer. The cofactor is pyridoxal 5'-phosphate.

It is found in the cytoplasm. The catalysed reaction is L-kynurenine + H2O = anthranilate + L-alanine + H(+). It catalyses the reaction 3-hydroxy-L-kynurenine + H2O = 3-hydroxyanthranilate + L-alanine + H(+). Its pathway is amino-acid degradation; L-kynurenine degradation; L-alanine and anthranilate from L-kynurenine: step 1/1. The protein operates within cofactor biosynthesis; NAD(+) biosynthesis; quinolinate from L-kynurenine: step 2/3. Catalyzes the cleavage of L-kynurenine (L-Kyn) and L-3-hydroxykynurenine (L-3OHKyn) into anthranilic acid (AA) and 3-hydroxyanthranilic acid (3-OHAA), respectively. The chain is Kynureninase from Eremothecium gossypii (strain ATCC 10895 / CBS 109.51 / FGSC 9923 / NRRL Y-1056) (Yeast).